Here is a 314-residue protein sequence, read N- to C-terminus: Methionyl-tRNA formyltransferase (314 aa).

A (6S)-5,6,7,8-tetrahydrofolate-binding site is contributed by 113–116; the sequence is SLLP.

Belongs to the Fmt family.

It carries out the reaction L-methionyl-tRNA(fMet) + (6R)-10-formyltetrahydrofolate = N-formyl-L-methionyl-tRNA(fMet) + (6S)-5,6,7,8-tetrahydrofolate + H(+). Attaches a formyl group to the free amino group of methionyl-tRNA(fMet). The formyl group appears to play a dual role in the initiator identity of N-formylmethionyl-tRNA by promoting its recognition by IF2 and preventing the misappropriation of this tRNA by the elongation apparatus. The polypeptide is Methionyl-tRNA formyltransferase (Pseudomonas aeruginosa (strain LESB58)).